We begin with the raw amino-acid sequence, 512 residues long: Reduced folate transporter (512 aa).

Methionine 1 bears the N-acetylmethionine mark. Residues 1–29 (MVPTGQVAEKQAYEEPRQDHELKSWRCLV) are Cytoplasmic-facing. The chain crosses the membrane as a helical span at residues 30–50 (FYLCFFGFMAQLRPGESFITP). 2 residues coordinate folate: isoleucine 48 and threonine 49. The Extracellular segment spans residues 51–62 (FLLERKFTKEQV). Residues 63-85 (TNEIIPMLPYSHLAVLVPVFLLT) traverse the membrane as a helical segment. The Cytoplasmic portion of the chain corresponds to 86 to 89 (DYLR). The chain crosses the membrane as a helical span at residues 90-110 (YKPVLVLQCLSFVCVWLLLLL). At 111–114 (GTSV) the chain is on the extracellular side. A helical transmembrane segment spans residues 115-137 (VHMQLMEVFYSVTMAARIAYSSY). Residues glutamate 121 and arginine 131 each contribute to the folate site. At 138-151 (IFSLVHPSRYQRMA) the chain is on the cytoplasmic side. The chain crosses the membrane as a helical span at residues 152 to 176 (SYSRAAVLLGVFISSVLGQALVTVG). Valine 162 provides a ligand contact to folate. Over 177 to 181 (HISTY) the chain is Extracellular. Residues 182–200 (TLNCVSLGFILFSLVLSLF) form a helical membrane-spanning segment. The Cytoplasmic portion of the chain corresponds to 201–266 (LKRPKRSLFF…ELVENARQPQ (66 aa)). A helical transmembrane segment spans residues 267-292 (LRLWCLWWVFNSSGYYLITYYVHVLW). Folate contacts are provided by tyrosine 281, tyrosine 282, and tyrosine 286. Over 293–300 (RSTDSSLS) the chain is Extracellular. The chain crosses the membrane as a helical span at residues 301–323 (YNGAVDAASTLLSAITSFSAGFL). Over 324 to 329 (SIRWTL) the chain is Cytoplasmic. A helical transmembrane segment spans residues 330–350 (WSKLVIAGVIAIQASLVFCMF). The Extracellular portion of the chain corresponds to 351 to 353 (QIR). A helical membrane pass occupies residues 354 to 377 (DIWVCYVTFVLFRGAYQFLVPIAT). Folate is bound by residues arginine 366 and glutamine 370. Topologically, residues 378–391 (FQIASSLSKELCAL) are cytoplasmic. A helical transmembrane segment spans residues 392 to 415 (VFGINTFLATALKTCITLVVSDKR). Positions 400-412 (ATALKTCITLVVS) are required for substrate-binding. Residues 416-423 (GLGLQVRD) are Extracellular-facing. A helical transmembrane segment spans residues 424–448 (QFRIYFIYFLMLSITCFAWAGLDGL). Residues 449-512 (RYCQRGRHQP…RGDLRVEAKA (64 aa)) are Cytoplasmic-facing. Serine 467, serine 472, and serine 477 each carry phosphoserine. Residues 478–512 (LQDGDLRGPQPSAPQLLSEDGMEDDRGDLRVEAKA) are disordered.

It belongs to the reduced folate carrier (RFC) transporter (TC 2.A.48) family.

The protein localises to the cell membrane. The protein resides in the apical cell membrane. It localises to the basolateral cell membrane. The catalysed reaction is 5-amino-1-(5-phospho-beta-D-ribosyl)imidazole-4-carboxamide(in) + (6S)-5-methyl-5,6,7,8-tetrahydrofolate(out) = 5-amino-1-(5-phospho-beta-D-ribosyl)imidazole-4-carboxamide(out) + (6S)-5-methyl-5,6,7,8-tetrahydrofolate(in). Its function is as follows. Antiporter that mediates the import of reduced folates, driven by the export of organic anions. Also acts as an importer of immunoreactive cyclic dinucleotides, but with a lower transporter activity. Mechanistically, acts as a secondary active transporter, which exports intracellular organic anions down their concentration gradients to facilitate the uptake of its substrates. Has high affinity for N5-methyltetrahydrofolate, the predominant circulating form of folate. Also mediates the import of antifolate drug methotrexate. 5-amino-4-imidazolecarboxamide riboside (AICAR), when phosphorylated to AICAR monophosphate, can serve as an organic anion for antiporter activity. The chain is Reduced folate transporter from Mus musculus (Mouse).